The sequence spans 268 residues: Tryptophan synthase alpha chain (268 aa).

Catalysis depends on proton acceptor residues Glu-49 and Asp-60.

This sequence belongs to the TrpA family. Tetramer of two alpha and two beta chains.

The enzyme catalyses (1S,2R)-1-C-(indol-3-yl)glycerol 3-phosphate + L-serine = D-glyceraldehyde 3-phosphate + L-tryptophan + H2O. It functions in the pathway amino-acid biosynthesis; L-tryptophan biosynthesis; L-tryptophan from chorismate: step 5/5. In terms of biological role, the alpha subunit is responsible for the aldol cleavage of indoleglycerol phosphate to indole and glyceraldehyde 3-phosphate. This is Tryptophan synthase alpha chain from Escherichia fergusonii (strain ATCC 35469 / DSM 13698 / CCUG 18766 / IAM 14443 / JCM 21226 / LMG 7866 / NBRC 102419 / NCTC 12128 / CDC 0568-73).